The following is a 325-amino-acid chain: Glutarate 2-hydroxylase (325 aa).

His-160, Asp-162, and His-292 together coordinate Fe cation.

It belongs to the glutarate hydroxylase family. As to quaternary structure, homotetramer. Fe(2+) is required as a cofactor.

The enzyme catalyses glutarate + 2-oxoglutarate + O2 = (S)-2-hydroxyglutarate + succinate + CO2. It participates in amino-acid degradation. Functionally, acts as an alpha-ketoglutarate-dependent dioxygenase catalyzing hydroxylation of glutarate (GA) to L-2-hydroxyglutarate (L2HG). Functions in a L-lysine degradation pathway that proceeds via cadaverine, glutarate and L-2-hydroxyglutarate. This chain is Glutarate 2-hydroxylase, found in Escherichia coli O157:H7.